The primary structure comprises 394 residues: Glycerol-3-phosphate dehydrogenase [NAD(+)] 2 (394 aa).

Residues 41 to 46, Lys152, and Ala185 each bind NAD(+); that span reads GSGNWG. Lys152 serves as a coordination point for substrate. Lys243 functions as the Proton acceptor in the catalytic mechanism. Arg308 and Gln337 together coordinate NAD(+). 308–309 contacts substrate; the sequence is RN.

This sequence belongs to the NAD-dependent glycerol-3-phosphate dehydrogenase family.

The enzyme catalyses sn-glycerol 3-phosphate + NAD(+) = dihydroxyacetone phosphate + NADH + H(+). The sequence is that of Glycerol-3-phosphate dehydrogenase [NAD(+)] 2 (gpd2) from Cyberlindnera jadinii (Torula yeast).